Consider the following 423-residue polypeptide: Probable serine/threonine-protein kinase PBL5 (423 aa).

A disordered region spans residues 1–66 (MGCFGCSKKS…DVNNEGGVGK (66 aa)). A lipid anchor (N-myristoyl glycine) is attached at G2. The S-palmitoyl cysteine moiety is linked to residue C3. Over residues 12–22 (KRSETNKDTVI) the composition is skewed to basic and acidic residues. The span at 43-52 (TQPSSDSTKV) shows a compositional bias: polar residues. The residue at position 92 (T92) is a Phosphothreonine. A Protein kinase domain is found at 103-380 (FRSDCFLGEG…SDVVLALNFL (278 aa)). ATP contacts are provided by residues 109-117 (LGEGGFGKV) and K132. Y177 carries the phosphotyrosine modification. The active-site Proton acceptor is the D230. S234 and S264 each carry phosphoserine. Phosphothreonine is present on residues T265 and T270. Residue Y278 is modified to Phosphotyrosine. Positions 383 to 398 (SKYDPNSPSSSSGKNP) are enriched in low complexity. Residues 383–423 (SKYDPNSPSSSSGKNPSFHRDRDDEEKRPHLVKETECEGSS) form a disordered region. Basic and acidic residues predominate over residues 400–423 (FHRDRDDEEKRPHLVKETECEGSS).

This sequence belongs to the protein kinase superfamily. Ser/Thr protein kinase family. In terms of processing, palmitoylation at Cys-3 and Cys-6 are required for plasma membrane location.

The protein localises to the cell membrane. It carries out the reaction L-seryl-[protein] + ATP = O-phospho-L-seryl-[protein] + ADP + H(+). It catalyses the reaction L-threonyl-[protein] + ATP = O-phospho-L-threonyl-[protein] + ADP + H(+). Its function is as follows. May be involved in plant defense signaling. The chain is Probable serine/threonine-protein kinase PBL5 from Arabidopsis thaliana (Mouse-ear cress).